Here is a 185-residue protein sequence, read N- to C-terminus: MKMIVGLGNPGQKYAGSKHNMGFMVVDGLAKRLNLTIDKLEFDAATATTRLNGEKIFLVKPQTFMNASGRAVRELMMFYQIQLDEIFVVQDDMDLTLGKLRLRKRGSAGGHNGIKDIISATGSDEFCRLKIGIQHPKRQRVVDWVLTPFSKTDQPLIDDAIEKADDALEDWLNGMPFDQLMNKFN.

Tyr-14 is a binding site for tRNA. The Proton acceptor role is filled by His-19. Residues Phe-64, Asn-66, and Asn-112 each contribute to the tRNA site.

Belongs to the PTH family. In terms of assembly, monomer.

Its subcellular location is the cytoplasm. The enzyme catalyses an N-acyl-L-alpha-aminoacyl-tRNA + H2O = an N-acyl-L-amino acid + a tRNA + H(+). In terms of biological role, hydrolyzes ribosome-free peptidyl-tRNAs (with 1 or more amino acids incorporated), which drop off the ribosome during protein synthesis, or as a result of ribosome stalling. Its function is as follows. Catalyzes the release of premature peptidyl moieties from peptidyl-tRNA molecules trapped in stalled 50S ribosomal subunits, and thus maintains levels of free tRNAs and 50S ribosomes. The polypeptide is Peptidyl-tRNA hydrolase (Lacticaseibacillus paracasei (strain ATCC 334 / BCRC 17002 / CCUG 31169 / CIP 107868 / KCTC 3260 / NRRL B-441) (Lactobacillus paracasei)).